The chain runs to 254 residues: tRNA (guanine-N(1)-)-methyltransferase (254 aa).

Residues Gly-119 and Ile-139 to Leu-144 each bind S-adenosyl-L-methionine.

It belongs to the RNA methyltransferase TrmD family. As to quaternary structure, homodimer.

It localises to the cytoplasm. The catalysed reaction is guanosine(37) in tRNA + S-adenosyl-L-methionine = N(1)-methylguanosine(37) in tRNA + S-adenosyl-L-homocysteine + H(+). Specifically methylates guanosine-37 in various tRNAs. This Dechloromonas aromatica (strain RCB) protein is tRNA (guanine-N(1)-)-methyltransferase.